Here is a 173-residue protein sequence, read N- to C-terminus: Translation initiation factor IF-3 (173 aa).

This sequence belongs to the IF-3 family. As to quaternary structure, monomer.

It localises to the cytoplasm. IF-3 binds to the 30S ribosomal subunit and shifts the equilibrium between 70S ribosomes and their 50S and 30S subunits in favor of the free subunits, thus enhancing the availability of 30S subunits on which protein synthesis initiation begins. This is Translation initiation factor IF-3 from Ehrlichia chaffeensis (strain ATCC CRL-10679 / Arkansas).